The primary structure comprises 667 residues: Trifunctional UDP-glucose 4,6-dehydratase/UDP-4-keto-6-deoxy-D-glucose 3,5-epimerase/UDP-4-keto-L-rhamnose-reductase RHM2 (667 aa).

15-21 provides a ligand contact to NAD(+); sequence GAAGFIA. T134 is a substrate binding site. D135 (proton donor) is an active-site residue. Catalysis depends on proton acceptor residues E136 and Y161. Residue 389–395 coordinates NADP(+); it reads GKTGWLG.

This sequence in the N-terminal section; belongs to the NAD(P)-dependent epimerase/dehydratase family. dTDP-glucose dehydratase subfamily. It in the C-terminal section; belongs to the dTDP-4-dehydrorhamnose reductase family. NAD(+) is required as a cofactor. It depends on NADP(+) as a cofactor. As to expression, expressed in roots, stems, leaves, seedlings, inflorescence tips, and siliques.

The enzyme catalyses UDP-alpha-D-glucose = UDP-4-dehydro-6-deoxy-alpha-D-glucose + H2O. It functions in the pathway carbohydrate biosynthesis. Its function is as follows. Trifunctional enzyme involved in UDP-beta-L-rhamnose biosynthesis, a precursor of the primary cell wall components rhamnogalacturonan I (RG-I) and rhamnogalacturonan II (RG-II). Catalyzes the dehydration of UDP-glucose to form UDP-4-dehydro-6-deoxy-D-glucose followed by the epimerization of the C3' and C5' positions of UDP-4-dehydro-6-deoxy-D-glucose to form UDP-4-keto-beta-L-rhamnose and the reduction of UDP-4-keto-beta-L-rhamnose to yield UDP-beta-L-rhamnose. Required for the normal seed coat epidermal development. This is Trifunctional UDP-glucose 4,6-dehydratase/UDP-4-keto-6-deoxy-D-glucose 3,5-epimerase/UDP-4-keto-L-rhamnose-reductase RHM2 from Arabidopsis thaliana (Mouse-ear cress).